A 218-amino-acid chain; its full sequence is MSDAGTEEFDEEQGSLGEYEGDRNEAGERHGQGKAVLPRGDTYQGAYENGKRCGQGTYKFKNGARYTGEWYMNLKHGQGVLYYPDGSKYEGSWVDDQRQGHGVYTYPNGDTYDGEWLHHQRHGQGTYTHQETGSQYRGTWVVGNMESTGELIQLNHRYHGNFVNNNPSGPGKYVFDIGCEQHGEYFQLEPDKGEAEEDETLISTTLKWKPKAVTGLSV.

Positions methionine 1 to glutamine 13 are enriched in acidic residues. Residues methionine 1–glutamate 48 form a disordered region. MORN repeat units follow at residues tyrosine 19–threonine 42, tyrosine 43–arginine 65, tyrosine 66–lysine 88, tyrosine 89–threonine 111, tyrosine 112–serine 134, and tyrosine 158–glutamate 180. The segment covering glutamate 20 to glycine 31 has biased composition (basic and acidic residues).

As to quaternary structure, component of the axonemal radial spoke complexes. Interacts with septin SEPT7. Testis-specific.

The protein resides in the cytoplasm. Its subcellular location is the cytoskeleton. It is found in the cilium axoneme. The protein localises to the flagellum basal body. It localises to the flagellum axoneme. Its function is as follows. Functions as part of axonemal radial spoke complexes that play an important part in the motility of sperm and cilia. This chain is Radial spoke head 1 homolog (rsph1), found in Cyprinus carpio (Common carp).